The primary structure comprises 370 residues: Acyl-CoA:lysophosphatidylglycerol acyltransferase 1 (370 aa).

The chain crosses the membrane as a helical span at residues F22–I42. An HXXXXD motif motif is present at residues H101 to D106. The chain crosses the membrane as a helical span at residues L342–I362.

This sequence belongs to the 1-acyl-sn-glycerol-3-phosphate acyltransferase family. As to expression, highly expressed in liver and placenta. Also expressed in peripheral blood, lung, kidney and brain. Detected at lower levels in colon. High expression is detected in brain and testis.

Its subcellular location is the endoplasmic reticulum membrane. It catalyses the reaction a 2-acyl-sn-glycero-3-phosphoethanolamine + octadecanoyl-CoA = 1-octadecanoyl-2-acyl-sn-glycero-3-phosphoethanolamine + CoA. The catalysed reaction is 2-(9Z-octadecenoyl)-sn-glycero-3-phosphoethanolamine + octadecanoyl-CoA = 1-octadecanoyl-2-(9Z-octadecenoyl)-sn-glycero-3-phosphoethanolamine + CoA. The enzyme catalyses a 2-acyl-sn-glycero-3-phosphoethanolamine + hexadecanoyl-CoA = 1-hexadecanoyl-2-acyl-sn-glycero-3-phosphoethanolamine + CoA. It carries out the reaction 2-(9Z-octadecenoyl)-sn-glycero-3-phosphoethanolamine + hexadecanoyl-CoA = 1-hexadecanoyl-2-(9Z-octadecenoyl)-sn-glycero-3-phosphoethanolamine + CoA. It catalyses the reaction 1-tetradecanoyl-sn-glycero-3-phospho-(1'-sn-glycerol) + hexadecanoyl-CoA = 1-tetradecanoyl-2-hexadecanoyl-sn-glycero-3-phospho-(1'-sn-glycerol) + CoA. The catalysed reaction is 1-hexadecanoyl-sn-glycero-3-phospho-(1'-sn-glycerol) + dodecanoyl-CoA = 1-hexadecanoyl-2-dodecanoyl-sn-glycero-3-phospho-(1'-sn-glycerol) + CoA. The enzyme catalyses 1-hexadecanoyl-sn-glycero-3-phospho-(1'-sn-glycerol) + hexadecanoyl-CoA = 1,2-dihexadecanoyl-sn-glycero-3-phospho-(1'-sn-glycerol) + CoA. It carries out the reaction 1-hexadecanoyl-sn-glycero-3-phospho-(1'-sn-glycerol) + octadecanoyl-CoA = 1-hexadecanoyl-2-octadecanoyl-sn-glycero-3-phospho-(1'-sn-glycerol) + CoA. It catalyses the reaction 1-octadecanoyl-sn-glycero-3-phospho-(1'-sn-glycerol) + hexadecanoyl-CoA = 1-octadecanoyl-2-hexadecanoyl-sn-glycero-3-phospho-(1'-sn-glycerol) + CoA. The catalysed reaction is 1-(9Z-octadecenoyl)-sn-glycero-3-phospho-(1'-sn-glycerol) + dodecanoyl-CoA = 1-(9Z-octadecenoyl)-2-dodecanoyl-sn-glycero-3-phospho-(1'-sn-glycerol) + CoA. The enzyme catalyses 1-hexadecanoyl-sn-glycero-3-phospho-(1'-sn-glycerol) + (9Z)-octadecenoyl-CoA = 1-hexadecanoyl-2-(9Z-octadecenoyl)-sn-glycero-3-phospho-(1'-sn-glycerol) + CoA. It carries out the reaction 1-(9Z-octadecenoyl)-sn-glycero-3-phospho-(1'-sn-glycerol) + hexadecanoyl-CoA = 1-(9Z-octadecenoyl)-2-hexadecanoyl-sn-glycero-3-phospho-(1'-sn-glycerol) + CoA. It catalyses the reaction 1-(9Z-octadecenoyl)-sn-glycero-3-phospho-(1'-sn-glycerol) + (9Z)-octadecenoyl-CoA = 1,2-di-(9Z-octadecenoyl)-sn-glycero-3-phospho-(1'-sn-glycerol) + CoA. The catalysed reaction is a 2-acylglycerol + an acyl-CoA = a 1,2-diacylglycerol + CoA. The enzyme catalyses a 2-acylglycerol + hexadecanoyl-CoA = a 1-hexadecanoyl-2-acylglycerol + CoA. It carries out the reaction a 1-acylglycerol + hexadecanoyl-CoA = an hexadecanoyl-acylglycerol + CoA. It catalyses the reaction a 2-acyl-sn-glycero-3-phosphocholine + an acyl-CoA = a 1,2-diacyl-sn-glycero-3-phosphocholine + CoA. The catalysed reaction is 2-(9Z-octadecenoyl)-sn-glycero-3-phosphocholine + octadecanoyl-CoA = 1-octadecanoyl-2-(9Z-octadecenoyl)-sn-glycero-3-phosphocholine + CoA. The enzyme catalyses 2-(9Z,12Z-octadecadienoyl)-sn-glycero-3-phosphocholine + octadecanoyl-CoA = 1-octadecanoyl-2-(9Z,12Z)-octadecadienoyl-sn-glycero-3-phosphocholine + CoA. It carries out the reaction 2-(5Z,8Z,11Z,14Z)-eicosatetraenoyl-sn-glycero-3-phosphocholine + octadecanoyl-CoA = 1-octadecanoyl-2-(5Z,8Z,11Z,14Z-eicosatetraenoyl)-sn-glycero-3-phosphocholine + CoA. It catalyses the reaction 2-(9Z-octadecenoyl)-sn-glycero-3-phosphocholine + hexadecanoyl-CoA = 1-hexadecanoyl-2-(9Z-octadecenoyl)-sn-glycero-3-phosphocholine + CoA. The catalysed reaction is 2-(9Z-octadecenoyl)-sn-glycero-3-phospho-L-serine + hexadecanoyl-CoA = 1-hexadecanoyl-2-(9Z-octadecenoyl)-sn-glycero-3-phospho-L-serine + CoA. The enzyme catalyses 2-(4Z,7Z,10Z,13Z,16Z,19Z-docosahexaenoyl)-sn-glycero-3-phosphocholine + octadecanoyl-CoA = 1-octadecanoyl-2-(4Z,7Z,10Z,13Z,16Z,19Z-docosahexaenoyl)-sn-glycero-3-phosphocholine + CoA. It carries out the reaction 1-(9Z-octadecenoyl)-sn-glycero-3-phospho-L-serine + octadecanoyl-CoA = 1-(9Z-octadecenoyl)-2-octadecanoyl-sn-glycero-3-phospho-L-serine + CoA. It catalyses the reaction a 2-acyl-sn-glycero-3-phosphoethanolamine + a fatty acyl-CoA = a 1,2-diacyl-sn-glycero-3-phosphoethanolamine + CoA. Lysophospholipid acyltransferase involved in fatty acyl chain remodeling of glycerophospholipids in the endoplasmic reticulum membrane. Selectively catalyzes the transfer and esterification of saturated long-chain fatty acids from acyl-CoA to the sn-1 position of 1-lyso-2-acyl phosphatidylethanolamines (1-lyso-PE, LPE), with a preference for stearoyl CoA over palmitoyl CoA as acyl donor. Acts in concert with an unknown phospholipase A1 to convert palmitate phosphatidylethanolamine (PE) species into stearate ones. Provides substrates to the PE methylation pathway, controlling stearate/palmitate composition of PE and phosphatidylcholine (PC) species with an overall impact on de novo hepatic lipid synthesis, body fat content and life span. Can acylate lysophosphatidylglycerols (LPG) using various saturated fatty acyl-CoAs as acyl donors. Can also acylate monoacylglycerols with a preference for 2-monoacylglycerols over 1-monoacylglycerols. Has no activity toward lysophosphatidic acids (LPA). This chain is Acyl-CoA:lysophosphatidylglycerol acyltransferase 1, found in Homo sapiens (Human).